The sequence spans 489 residues: N-succinylglutamate 5-semialdehyde dehydrogenase (489 aa).

223-228 (GSSNTG) serves as a coordination point for NAD(+). Catalysis depends on residues Glu-246 and Cys-280.

This sequence belongs to the aldehyde dehydrogenase family. AstD subfamily.

The enzyme catalyses N-succinyl-L-glutamate 5-semialdehyde + NAD(+) + H2O = N-succinyl-L-glutamate + NADH + 2 H(+). It participates in amino-acid degradation; L-arginine degradation via AST pathway; L-glutamate and succinate from L-arginine: step 4/5. Functionally, catalyzes the NAD-dependent reduction of succinylglutamate semialdehyde into succinylglutamate. The polypeptide is N-succinylglutamate 5-semialdehyde dehydrogenase (Idiomarina loihiensis (strain ATCC BAA-735 / DSM 15497 / L2-TR)).